A 400-amino-acid chain; its full sequence is Tyrosine--tRNA ligase (400 aa).

Residues 45–54 carry the 'HIGH' region motif; sequence PTAPDLHLGH. The 'KMSKS' region signature appears at 230–234; that stretch reads KMSKS. Lys233 is a binding site for ATP. One can recognise an S4 RNA-binding domain in the interval 339 to 399; it reads EWIARVLVIA…GKRRFAKVII (61 aa).

The protein belongs to the class-I aminoacyl-tRNA synthetase family. TyrS type 2 subfamily. Homodimer.

The protein localises to the cytoplasm. The enzyme catalyses tRNA(Tyr) + L-tyrosine + ATP = L-tyrosyl-tRNA(Tyr) + AMP + diphosphate + H(+). Functionally, catalyzes the attachment of tyrosine to tRNA(Tyr) in a two-step reaction: tyrosine is first activated by ATP to form Tyr-AMP and then transferred to the acceptor end of tRNA(Tyr). This Helicobacter hepaticus (strain ATCC 51449 / 3B1) protein is Tyrosine--tRNA ligase.